A 259-amino-acid chain; its full sequence is Small ribosomal subunit protein eS1 (259 aa).

Belongs to the eukaryotic ribosomal protein eS1 family. In terms of assembly, component of the small ribosomal subunit. Mature ribosomes consist of a small (40S) and a large (60S) subunit. The 40S subunit contains about 33 different proteins and 1 molecule of RNA (18S). The 60S subunit contains about 49 different proteins and 3 molecules of RNA (25S, 5.8S and 5S).

It is found in the cytoplasm. This Monosiga brevicollis (Choanoflagellate) protein is Small ribosomal subunit protein eS1.